A 372-amino-acid polypeptide reads, in one-letter code: Chloromuconate cycloisomerase (372 aa).

The active-site Proton acceptor is Lys-158. 3 residues coordinate Mn(2+): Asp-187, Glu-213, and Asp-238. Glu-316 acts as the Proton donor in catalysis.

This sequence belongs to the mandelate racemase/muconate lactonizing enzyme family. The cofactor is Mn(2+).

The enzyme catalyses 2-[(2R)-2-chloro-2,5-dihydro-5-oxofuryl]acetate = 3-chloro-cis,cis-muconate + H(+). Its pathway is aromatic compound metabolism; 3-chlorocatechol degradation. The sequence is that of Chloromuconate cycloisomerase (tfdDII) from Cupriavidus pinatubonensis (strain JMP 134 / LMG 1197) (Cupriavidus necator (strain JMP 134)).